The sequence spans 519 residues: Glucose-1-phosphate adenylyltransferase large subunit 3, chloroplastic/amyloplastic (519 aa).

The transit peptide at 1-74 directs the protein to the chloroplast; sequence MQFSSVFPLE…DAGPDTLHVR (74 aa).

Belongs to the bacterial/plant glucose-1-phosphate adenylyltransferase family. In terms of assembly, heterotetramer composed of two small and two large subunits. Expressed in stems.

It is found in the plastid. The protein resides in the chloroplast. The enzyme catalyses alpha-D-glucose 1-phosphate + ATP + H(+) = ADP-alpha-D-glucose + diphosphate. It functions in the pathway glycan biosynthesis; starch biosynthesis. Its activity is regulated as follows. Activated by 3'phosphoglycerate, inhibited by orthophosphate. Allosteric regulation. In terms of biological role, involved in synthesis of starch. Catalyzes the synthesis of ADP-glucose, a molecule that serves as an activated glycosyl donor for alpha-1,4-glucan synthesis. Essential for starch synthesis in leaf chloroplasts. The sequence is that of Glucose-1-phosphate adenylyltransferase large subunit 3, chloroplastic/amyloplastic from Oryza sativa subsp. japonica (Rice).